Here is a 220-residue protein sequence, read N- to C-terminus: Large ribosomal subunit protein uL16 (220 aa).

This sequence belongs to the universal ribosomal protein uL16 family. Component of the small ribosomal subunit. Mature ribosomes consist of a small (40S) and a large (60S) subunit. The 40S subunit contains about 33 different proteins and 1 molecule of RNA (18S). The 60S subunit contains about 49 different proteins and 3 molecules of RNA (25S, 5.8S and 5S).

This Vitis riparia (Frost grape) protein is Large ribosomal subunit protein uL16 (RPL10).